A 169-amino-acid polypeptide reads, in one-letter code: Succinate dehydrogenase cytochrome b560 subunit, mitochondrial (169 aa).

A mitochondrion-targeting transit peptide spans 1–29; that stretch reads MAALLLRHVGRHCLRAHFSPQLCIRNAVP. The Mitochondrial matrix segment spans residues 30–65; sequence LGTTAKEEMERFWNKNIGSNRPLSPHITIYSWSLPM. A helical membrane pass occupies residues 66 to 90; sequence AMSICHRGTGIALSAGVSLFGMSAL. The Mitochondrial intermembrane segment spans residues 91–110; the sequence is LLPGNFESYLELVKSLCLGP. A helical transmembrane segment spans residues 111 to 139; it reads ALIHTAKFALVFPLMYHTWNGIRHLMWDL. A heme b-binding site is contributed by histidine 127. Over 140 to 146 the chain is Mitochondrial matrix; it reads GKGLKIP. A helical transmembrane segment spans residues 147 to 167; the sequence is QLYQSGVVVLVLTVLSSMGLA. Over 168 to 169 the chain is Mitochondrial intermembrane; the sequence is AM.

Belongs to the cytochrome b560 family. In terms of assembly, component of complex II composed of four subunits: the flavoprotein (FP) SDHA, iron-sulfur protein (IP) SDHB, and a cytochrome b560 composed of SDHC and SDHD. Requires heme b as cofactor.

The protein localises to the mitochondrion inner membrane. It participates in carbohydrate metabolism; tricarboxylic acid cycle. Its function is as follows. Membrane-anchoring subunit of succinate dehydrogenase (SDH) that is involved in complex II of the mitochondrial electron transport chain and is responsible for transferring electrons from succinate to ubiquinone (coenzyme Q). SDH also oxidizes malate to the non-canonical enol form of oxaloacetate, enol-oxaloacetate. Enol-oxaloacetate, which is a potent inhibitor of the succinate dehydrogenase activity, is further isomerized into keto-oxaloacetate. The chain is Succinate dehydrogenase cytochrome b560 subunit, mitochondrial (SDHC) from Homo sapiens (Human).